Here is a 359-residue protein sequence, read N- to C-terminus: Glutamate 5-kinase (359 aa).

Lys7 contributes to the ATP binding site. 3 residues coordinate substrate: Ser47, Asp135, and Asn147. 202–208 serves as a coordination point for ATP; that stretch reads SGGITSK. One can recognise a PUA domain in the interval 266-343; sequence KGSIFINEGA…DQLEDVLGYS (78 aa).

This sequence belongs to the glutamate 5-kinase family.

It is found in the cytoplasm. It catalyses the reaction L-glutamate + ATP = L-glutamyl 5-phosphate + ADP. Its pathway is amino-acid biosynthesis; L-proline biosynthesis; L-glutamate 5-semialdehyde from L-glutamate: step 1/2. In terms of biological role, catalyzes the transfer of a phosphate group to glutamate to form L-glutamate 5-phosphate. This chain is Glutamate 5-kinase, found in Kosmotoga olearia (strain ATCC BAA-1733 / DSM 21960 / TBF 19.5.1).